We begin with the raw amino-acid sequence, 234 residues long: Ubiquinone biosynthesis O-methyltransferase (234 aa).

Residues Arg-40, Gly-59, Asp-80, and Met-123 each contribute to the S-adenosyl-L-methionine site.

It belongs to the methyltransferase superfamily. UbiG/COQ3 family.

It catalyses the reaction a 3-demethylubiquinol + S-adenosyl-L-methionine = a ubiquinol + S-adenosyl-L-homocysteine + H(+). It carries out the reaction a 3-(all-trans-polyprenyl)benzene-1,2-diol + S-adenosyl-L-methionine = a 2-methoxy-6-(all-trans-polyprenyl)phenol + S-adenosyl-L-homocysteine + H(+). The protein operates within cofactor biosynthesis; ubiquinone biosynthesis. Its function is as follows. O-methyltransferase that catalyzes the 2 O-methylation steps in the ubiquinone biosynthetic pathway. The protein is Ubiquinone biosynthesis O-methyltransferase of Coxiella burnetii (strain CbuG_Q212) (Coxiella burnetii (strain Q212)).